A 60-amino-acid chain; its full sequence is Large ribosomal subunit protein bL32 (60 aa).

The segment covering 1–16 (MAVPKRKTTPSKRGMR) has biased composition (basic residues). The interval 1–34 (MAVPKRKTTPSKRGMRRAHDALSSPVYIEDKDSG) is disordered.

Belongs to the bacterial ribosomal protein bL32 family.

This Maricaulis maris (strain MCS10) (Caulobacter maris) protein is Large ribosomal subunit protein bL32.